Reading from the N-terminus, the 326-residue chain is Zona pellucida-binding protein 2 (326 aa).

Residues 1–20 (MLAWALLSAVLWSLAGVGSA) form the signal peptide. N-linked (GlcNAc...) asparagine glycosylation is found at Asn-86, Asn-220, and Asn-256.

The protein belongs to the zona pellucida-binding protein Sp38 family. In terms of processing, N-glycosylated.

It localises to the secreted. It is found in the cytoplasmic vesicle. Its subcellular location is the secretory vesicle. The protein resides in the acrosome. Its function is as follows. Is implicated in sperm-oocyte interaction during fertilization. This chain is Zona pellucida-binding protein 2 (Zpbp2), found in Rattus norvegicus (Rat).